The primary structure comprises 257 residues: NAD-dependent protein deacylase (257 aa).

The 252-residue stretch at 1-252 (MLGHAAKLLA…LRRVKDIMAE (252 aa)) folds into the Deacetylase sirtuin-type domain. NAD(+) is bound at residue 20-39 (GAGISAESGIPTFRGRNGLW). Substrate-binding residues include Y64 and R67. 98-101 (QNVD) contacts NAD(+). The Proton acceptor role is filled by H116. C124, C127, C151, and C154 together coordinate Zn(2+). Residues 191–193 (GTS), 217–219 (NVE), and A235 contribute to the NAD(+) site.

The protein belongs to the sirtuin family. Class III subfamily. The cofactor is Zn(2+).

The protein localises to the cytoplasm. The enzyme catalyses N(6)-acetyl-L-lysyl-[protein] + NAD(+) + H2O = 2''-O-acetyl-ADP-D-ribose + nicotinamide + L-lysyl-[protein]. The catalysed reaction is N(6)-succinyl-L-lysyl-[protein] + NAD(+) + H2O = 2''-O-succinyl-ADP-D-ribose + nicotinamide + L-lysyl-[protein]. Functionally, NAD-dependent lysine deacetylase and desuccinylase that specifically removes acetyl and succinyl groups on target proteins. Modulates the activities of several proteins which are inactive in their acylated form. Deacetylates the N-terminal lysine residue of Alba, the major archaeal chromatin protein and that, in turn, increases Alba's DNA binding affinity, thereby repressing transcription. The polypeptide is NAD-dependent protein deacylase (Thermococcus kodakarensis (strain ATCC BAA-918 / JCM 12380 / KOD1) (Pyrococcus kodakaraensis (strain KOD1))).